Consider the following 343-residue polypeptide: Probable dual-specificity RNA methyltransferase RlmN (343 aa).

Residue Glu91 is the Proton acceptor of the active site. The Radical SAM core domain maps to 97–327 (YKHGNSICVS…TTIRREMGSD (231 aa)). An intrachain disulfide couples Cys104 to Cys332. Positions 111, 115, and 118 each coordinate [4Fe-4S] cluster. Residues 158 to 159 (GE), Ser190, 213 to 215 (SLH), and Asn289 contribute to the S-adenosyl-L-methionine site. Cys332 (S-methylcysteine intermediate) is an active-site residue.

This sequence belongs to the radical SAM superfamily. RlmN family. Requires [4Fe-4S] cluster as cofactor.

The protein localises to the cytoplasm. It carries out the reaction adenosine(2503) in 23S rRNA + 2 reduced [2Fe-2S]-[ferredoxin] + 2 S-adenosyl-L-methionine = 2-methyladenosine(2503) in 23S rRNA + 5'-deoxyadenosine + L-methionine + 2 oxidized [2Fe-2S]-[ferredoxin] + S-adenosyl-L-homocysteine. The catalysed reaction is adenosine(37) in tRNA + 2 reduced [2Fe-2S]-[ferredoxin] + 2 S-adenosyl-L-methionine = 2-methyladenosine(37) in tRNA + 5'-deoxyadenosine + L-methionine + 2 oxidized [2Fe-2S]-[ferredoxin] + S-adenosyl-L-homocysteine. Its function is as follows. Specifically methylates position 2 of adenine 2503 in 23S rRNA and position 2 of adenine 37 in tRNAs. In Clostridium novyi (strain NT), this protein is Probable dual-specificity RNA methyltransferase RlmN.